The chain runs to 902 residues: Cytosolic 10-formyltetrahydrofolate dehydrogenase (902 aa).

Positions 1-310 (MKIAVIGQSL…LASNFFKGAA (310 aa)) are hydrolase domain. Phosphoserine is present on S9. K38 is modified (N6-succinyllysine). 88 to 90 (QFI) contributes to the (6R)-10-formyltetrahydrofolate binding site. The active-site Proton donor is H106. Position 142 (D142) interacts with (6R)-10-formyltetrahydrofolate. A Carrier domain is found at 318–395 (EAELVTAEAV…DFIQLLVRKL (78 aa)). S354 carries the O-(pantetheine 4'-phosphoryl)serine modification. The interval 417-902 (TVRMPHQLFI…LRVKTVTFEY (486 aa)) is aldehyde dehydrogenase domain. NADP(+)-binding positions include 571–573 (IPW) and 597–600 (KPAQ). S629 and S631 each carry phosphoserine. NADP(+)-binding positions include 630–635 (GSLVGQ) and 650–651 (GS). Position 660 is an N6-succinyllysine (K660). E673 (proton acceptor) is an active-site residue. Residue 673–674 (EL) coordinates NADP(+). The active-site Proton donor is C707. Residue K757 participates in NADP(+) binding. K767 carries the N6-succinyllysine modification. 804-806 (ESF) is a binding site for NADP(+). S825 is modified (phosphoserine). N6-acetyllysine is present on K882.

This sequence in the N-terminal section; belongs to the GART family. The protein in the C-terminal section; belongs to the aldehyde dehydrogenase family. ALDH1L subfamily. In terms of assembly, homotetramer. In terms of processing, phosphopantetheinylation at Ser-354 by AASDHPPT is required for the formyltetrahydrofolate dehydrogenase activity. As to expression, highly expressed in liver, pancreas and kidney.

It localises to the cytoplasm. The protein localises to the cytosol. The enzyme catalyses (6R)-10-formyltetrahydrofolate + NADP(+) + H2O = (6S)-5,6,7,8-tetrahydrofolate + CO2 + NADPH + H(+). In terms of biological role, cytosolic 10-formyltetrahydrofolate dehydrogenase that catalyzes the NADP(+)-dependent conversion of 10-formyltetrahydrofolate to tetrahydrofolate and carbon dioxide. May also have an NADP(+)-dependent aldehyde dehydrogenase activity towards formaldehyde, acetaldehyde, propionaldehyde, and benzaldehyde. The protein is Cytosolic 10-formyltetrahydrofolate dehydrogenase of Homo sapiens (Human).